The sequence spans 172 residues: RNA silencing suppressor p19 (172 aa).

Basic and acidic residues-rich tracts occupy residues 1–14 and 150–172; these read MERAIQGSDVREQA and SEREGNVSRRRPEGTEAFKEESE. Disordered regions lie at residues 1 to 34 and 145 to 172; these read MERAIQGSDVREQADSECWDGGGGGTTSPFKLPD and LQPTPSEREGNVSRRRPEGTEAFKEESE.

This sequence belongs to the tombusvirus protein p19 family. Homodimer.

In terms of biological role, viral suppressor of RNA silencing which binds specifically to silencing RNAs (siRNAs). Acts as a molecular caliper to specifically select siRNAs based on the length of the duplex region of the RNA. The sequence is that of RNA silencing suppressor p19 from Cymbidium ringspot virus (CymRSV).